We begin with the raw amino-acid sequence, 318 residues long: Ubiquinol oxidase (318 aa).

Residues 150–170 (VVVLETVAAIPGMVGGMFRHL) form a helical membrane-spanning segment. Residues glutamate 154, glutamate 193, and histidine 196 each contribute to the Fe cation site. Residues 212-232 (MLIKLGQFLFFNGYMVFYFVA) traverse the membrane as a helical segment. Glutamate 244, glutamate 295, and histidine 298 together coordinate Fe cation.

It belongs to the alternative oxidase family. In terms of assembly, found as monomers and homodimers. Fe cation is required as a cofactor.

The protein resides in the mitosome membrane. The enzyme catalyses 2 a ubiquinol + O2 = 2 a ubiquinone + 2 H2O. In terms of biological role, alternative oxidase which function may be to reoxidize reducing equivalents produced by glycolysis such as ubiquinol. In Trachipleistophora hominis (Microsporidian parasite), this protein is Ubiquinol oxidase (AOX).